The sequence spans 276 residues: Diaminopimelate epimerase (276 aa).

The substrate site is built by Asn13, Gln46, and Asn66. Cys75 functions as the Proton donor in the catalytic mechanism. Substrate contacts are provided by residues 76-77, Asn159, Asn192, and 210-211; these read GN and ER. Cys219 serves as the catalytic Proton acceptor. Substrate is bound at residue 220-221; that stretch reads GT.

Belongs to the diaminopimelate epimerase family. In terms of assembly, homodimer.

Its subcellular location is the cytoplasm. It catalyses the reaction (2S,6S)-2,6-diaminopimelate = meso-2,6-diaminopimelate. It participates in amino-acid biosynthesis; L-lysine biosynthesis via DAP pathway; DL-2,6-diaminopimelate from LL-2,6-diaminopimelate: step 1/1. Its function is as follows. Catalyzes the stereoinversion of LL-2,6-diaminopimelate (L,L-DAP) to meso-diaminopimelate (meso-DAP), a precursor of L-lysine and an essential component of the bacterial peptidoglycan. The chain is Diaminopimelate epimerase from Pseudomonas putida (strain GB-1).